The sequence spans 77 residues: Translation initiation factor IF-1, chloroplastic (77 aa).

Residues 1 to 71 (MKEQKWIHEG…TRGRIIYRLR (71 aa)) form the S1-like domain.

Belongs to the IF-1 family. In terms of assembly, component of the 30S ribosomal translation pre-initiation complex which assembles on the 30S ribosome in the order IF-2 and IF-3, IF-1 and N-formylmethionyl-tRNA(fMet); mRNA recruitment can occur at any time during PIC assembly.

The protein resides in the plastid. The protein localises to the chloroplast. Its function is as follows. One of the essential components for the initiation of protein synthesis. Stabilizes the binding of IF-2 and IF-3 on the 30S subunit to which N-formylmethionyl-tRNA(fMet) subsequently binds. Helps modulate mRNA selection, yielding the 30S pre-initiation complex (PIC). Upon addition of the 50S ribosomal subunit IF-1, IF-2 and IF-3 are released leaving the mature 70S translation initiation complex. In Nandina domestica (Heavenly bamboo), this protein is Translation initiation factor IF-1, chloroplastic.